The sequence spans 422 residues: Structural polyprotein (422 aa).

The Extracellular portion of the chain corresponds to 1-359 (SVTEHFNVYK…WPHEIIQYYY (359 aa)). N-linked (GlcNAc...) asparagine; by host glycosylation is found at Asn200 and Asn262. The chain crosses the membrane as a helical span at residues 360–382 (GLYPAATIAAVSGXSLMALLTLA). At 383-422 (ATCCMLATARRKCLTPYALTPGAVVPLTLGLXXCAPRANA) the chain is on the cytoplasmic side. 3 S-palmitoyl cysteine; by host lipidation sites follow: Cys385, Cys395, and Cys416. The segment at 395–415 (CLTPYALTPGAVVPLTLGLXX) is transient transmembrane before p62-6K protein processing.

As to quaternary structure, spike glycoprotein E2: Processing of the precursor of protein E3/E2 into E2 and E3 results in a heterodimer of the spike glycoproteins E2 and E1. Spike glycoprotein E2: Spike at virion surface are constituted of three E2-E1 heterodimers. Spike glycoprotein E2: Interacts with 6K protein. In terms of processing, structural polyprotein: Specific enzymatic cleavages in vivo yield mature proteins. Capsid protein is auto-cleaved during polyprotein translation, unmasking a signal peptide at the N-terminus of the precursor of E3/E2. The remaining polyprotein is then targeted to the host endoplasmic reticulum, where host signal peptidase cleaves it into pE2, 6K and E1 proteins. pE2 is further processed to mature E3 and E2 by host furin in trans-Golgi vesicle. Spike glycoprotein E2: Palmitoylated via thioester bonds. These palmitoylations may induce disruption of the C-terminus transmembrane. This would result in the reorientation of E2 C-terminus from lumenal to cytoplasmic side. Post-translationally, spike glycoprotein E2: N-glycosylated.

It is found in the virion membrane. Its subcellular location is the host cell membrane. Its function is as follows. Spike glycoprotein E2: Plays a role in viral attachment to target host cell, by binding to the cell receptor. Synthesized as a p62 precursor which is processed by furin at the cell membrane just before virion budding, giving rise to E2-E1 heterodimer. The p62-E1 heterodimer is stable, whereas E2-E1 is unstable and dissociate at low pH. p62 is processed at the last step, presumably to avoid E1 fusion activation before its final export to cell surface. E2 C-terminus contains a transitory transmembrane that would be disrupted by palmitoylation, resulting in reorientation of the C-terminal tail from lumenal to cytoplasmic side. This step is critical since E2 C-terminus is involved in budding by interacting with capsid proteins. This release of E2 C-terminus in cytoplasm occurs lately in protein export, and precludes premature assembly of particles at the endoplasmic reticulum membrane. This is Structural polyprotein from Ross river virus (strain 213970) (RRV).